The following is a 131-amino-acid chain: MANLRKLGRRTDHRTAMLRNLVQSLFENGKIETTVTRAKEARREAEKMITLGKKGDLSARREALKYIYKKDVVYTLFEEIAPVYADRQGGYTRILKLGPRRGDGTEMCILELVDYTKKESSEEKETVKADK.

It belongs to the bacterial ribosomal protein bL17 family. Part of the 50S ribosomal subunit. Contacts protein L32.

In Finegoldia magna (strain ATCC 29328 / DSM 20472 / WAL 2508) (Peptostreptococcus magnus), this protein is Large ribosomal subunit protein bL17.